Consider the following 2493-residue polypeptide: Adenylate cyclase (2493 aa).

5 stretches are compositionally biased toward polar residues: residues 1–18 (MLFT…SPEQ), 42–51 (RDSNGSSNFT), 60–78 (SQQY…QPDI), 129–147 (PANS…SISP), and 197–210 (APFS…TSVN). Disordered regions lie at residues 1–85 (MLFT…SSTL), 99–148 (FEHA…ISPS), 197–325 (APFS…SSLS), 355–444 (NSPS…QSQS), 475–565 (GSIT…VNML), 616–660 (QAPV…KTSY), 753–832 (NVGE…GSKS), 854–882 (ALVQ…GAGA), and 904–967 (RPSK…ATGT). The span at 211–233 (PSAASTASPSTSAATRTRPRGGT) shows a compositional bias: low complexity. 2 stretches are compositionally biased toward polar residues: residues 234 to 246 (NASQ…TSFG) and 253 to 264 (LSSSRSQYSLRP). 2 stretches are compositionally biased toward basic residues: residues 287 to 303 (AVKK…KKSS) and 404 to 422 (HLKK…HLAK). Over residues 425-434 (KPGEDADSAR) the composition is skewed to basic and acidic residues. A compositionally biased stretch (polar residues) spans 500–525 (PSPSQTPIAERQTSVTSTVESPSHAS). Low complexity predominate over residues 534–555 (SLRTPSRTTASTSTSSASTVLS). Basic and acidic residues predominate over residues 630 to 640 (TDSELSDRKDS). Polar residues predominate over residues 641-660 (VVSTHSMRSNHSGISPKTSY). The segment covering 754–763 (VGEEEDDDDD) has biased composition (acidic residues). Composition is skewed to low complexity over residues 780 to 791 (SSSGISSTHASS) and 854 to 870 (ALVQ…QPSP). Polar residues predominate over residues 913 to 935 (RPNTAGSVGATRPSTTTLGSTLS). Positions 970–1072 (RNHFIRVYKT…LRFVFRPDSV (103 aa)) constitute a Ras-associating domain. LRR repeat units lie at residues 1086–1107 (TFQH…LYKH), 1110–1132 (WIVS…VQLC), 1134–1155 (SLRT…VRHS), 1157–1178 (TLTH…SLDL), 1181–1202 (ELMS…FSSI), 1204–1225 (TLRN…ICDV), 1227–1248 (SLVD…IANL), 1250–1271 (NLER…MSEL), 1273–1294 (SLRT…LGLP), 1295–1316 (RLQN…LGPQ), 1317–1336 (LTQV…AALT), 1339–1360 (DLTS…LFPQ), 1363–1385 (ALVK…GDLK), 1386–1407 (RLEM…IGDL), 1409–1430 (ALKE…LWLC), 1432–1453 (SLAH…PDIR), 1511–1534 (SLQK…SELT), 1535–1556 (SLEV…SLQT), 1559–1580 (KLRE…DLVV), 1583–1605 (ELRI…GKLK), 1606–1628 (KLAN…HYDW), and 1635–1654 (ELRY…TKLS). Positions 1710-2000 (AYGIADALGK…ESIMVMVISV (291 aa)) constitute a PPM-type phosphatase domain. Residues 2058 to 2194 (ALVFTDIKNS…PMVNRAARIS (137 aa)) enclose the Guanylate cyclase domain. Residues aspartate 2063 and aspartate 2105 each contribute to the Mg(2+) site. 3 disordered regions span residues 2220-2241 (DESS…TEEE), 2354-2378 (EADR…HGTA), and 2467-2493 (PPRA…ELVP). A compositionally biased stretch (polar residues) spans 2470–2485 (ASTSALSLPSPRTSPR).

Belongs to the adenylyl cyclase class-3 family. The cofactor is Mg(2+).

The enzyme catalyses ATP = 3',5'-cyclic AMP + diphosphate. Its function is as follows. Plays essential roles in regulation of cellular metabolism by catalyzing the synthesis of a second messenger, cAMP. The sequence is that of Adenylate cyclase (UAC1) from Mycosarcoma maydis (Corn smut fungus).